A 715-amino-acid chain; its full sequence is Staphylocoagulase (715 aa).

A signal peptide spans 1 to 26; it reads MKKQIISLGALAVASSLFTWDNKADA. A compositionally biased stretch (basic and acidic residues) spans 306 to 327; that stretch reads KYGESETKSPVVKEENKVEDPQ. 2 disordered regions span residues 306–348 and 430–470; these read KYGE…EETT and QGTE…FNKT. Polar residues predominate over residues 431–443; it reads GTESTLKGIQGES. Tandem repeats lie at residues 495-521, 522-548, 549-575, 576-602, 603-629, 630-656, 657-683, and 684-710. An 8 X 27 AA tandem repeats of A-R-P-[RT]-[FQY]-[NK]-K-[PA]-S-[EK]-T-N-A-Y-N-V-T-T-[NH]-[QAG]-[DN]-G-[TQ]-[VA]-[ST]-Y-G region spans residues 495–710; that stretch reads ARPRFNKPSE…THADGTATYG (216 aa). Residues 674–697 are disordered; that stretch reads THGNGQVSYGARPTYNKPSKTNAY.

This sequence belongs to the staphylocoagulase family.

Its function is as follows. Staphylocoagulase is an extracellular protein which specifically forms a complex with human prothrombin. This complex named staphylothrombin can clot fibrinogen without any proteolytic cleavage of prothrombin. The sequence is that of Staphylocoagulase from Staphylococcus aureus.